Reading from the N-terminus, the 140-residue chain is RxLR effector protein Avh23 (140 aa).

The N-terminal stretch at 1–21 (MRLTYFLTVIVVATLHAGGTA) is a signal peptide. The RxLR-dEER motif lies at 54–72 (RMLRKVKEDTVSKKDHEER). The stretch at 100 to 113 (QGAFQRQNAFVNRD) is one ADA2-binding IR1 repeat. One copy of the ADA2-binding IR2 repeat lies at 114 to 127 (QGAFQRQNAFVKRA).

Belongs to the RxLR effector family. As to quaternary structure, interacts with host histone acetyl transferase SAGA complex subunit ADA2.

It localises to the secreted. It is found in the host nucleus. The protein localises to the host cytoplasm. Its function is as follows. Effector that suppresses plant defense responses during the early stages of pathogen infection. Suppresses cell death induced by effectors and PAMPs in plant hosts. Acts as a modulator of histone acetyltransferase (HAT) in plants. Avh23 binds to the ADA2 subunit of the HAT complex SAGA and disrupts its assembly by interfering with the association of ADA2 with the catalytic subunit GCN5. As such, Avh23 suppresses H3K9 acetylation mediated by the ADA2/GCN5 module and increases plant susceptibility. The sequence is that of RxLR effector protein Avh23 from Phytophthora sojae (Soybean stem and root rot agent).